Reading from the N-terminus, the 104-residue chain is Large ribosomal subunit protein uL24 (104 aa).

Belongs to the universal ribosomal protein uL24 family. As to quaternary structure, part of the 50S ribosomal subunit.

One of two assembly initiator proteins, it binds directly to the 5'-end of the 23S rRNA, where it nucleates assembly of the 50S subunit. Functionally, one of the proteins that surrounds the polypeptide exit tunnel on the outside of the subunit. This chain is Large ribosomal subunit protein uL24, found in Pseudomonas syringae pv. syringae (strain B728a).